Consider the following 462-residue polypeptide: L-seryl-tRNA(Sec) selenium transferase (462 aa).

At K293 the chain carries N6-(pyridoxal phosphate)lysine.

It belongs to the SelA family. It depends on pyridoxal 5'-phosphate as a cofactor.

The protein resides in the cytoplasm. It carries out the reaction L-seryl-tRNA(Sec) + selenophosphate + H(+) = L-selenocysteinyl-tRNA(Sec) + phosphate. The protein operates within aminoacyl-tRNA biosynthesis; selenocysteinyl-tRNA(Sec) biosynthesis; selenocysteinyl-tRNA(Sec) from L-seryl-tRNA(Sec) (bacterial route): step 1/1. Converts seryl-tRNA(Sec) to selenocysteinyl-tRNA(Sec) required for selenoprotein biosynthesis. The chain is L-seryl-tRNA(Sec) selenium transferase from Clostridium botulinum (strain 657 / Type Ba4).